Consider the following 65-residue polypeptide: Protein translocase subunit SecE (65 aa).

The chain crosses the membrane as a helical span at residues 44–64 (LVMAVVGLIAYIVQLTTSLII).

This sequence belongs to the SecE/SEC61-gamma family. In terms of assembly, component of the Sec protein translocase complex. Heterotrimer consisting of SecY (alpha), SecG (beta) and SecE (gamma) subunits. The heterotrimers can form oligomers, although 1 heterotrimer is thought to be able to translocate proteins. Interacts with the ribosome. May interact with SecDF, and other proteins may be involved.

The protein localises to the cell membrane. In terms of biological role, essential subunit of the Sec protein translocation channel SecYEG. Clamps together the 2 halves of SecY. May contact the channel plug during translocation. The polypeptide is Protein translocase subunit SecE (Sulfolobus acidocaldarius (strain ATCC 33909 / DSM 639 / JCM 8929 / NBRC 15157 / NCIMB 11770)).